The chain runs to 326 residues: Beta-ketoacyl-[acyl-carrier-protein] synthase III (326 aa).

Active-site residues include C120 and H253. Positions 254–258 (QANIR) are ACP-binding. The active site involves N283.

It belongs to the thiolase-like superfamily. FabH family. As to quaternary structure, homodimer.

The protein localises to the cytoplasm. The enzyme catalyses malonyl-[ACP] + acetyl-CoA + H(+) = 3-oxobutanoyl-[ACP] + CO2 + CoA. It participates in lipid metabolism; fatty acid biosynthesis. Catalyzes the condensation reaction of fatty acid synthesis by the addition to an acyl acceptor of two carbons from malonyl-ACP. Catalyzes the first condensation reaction which initiates fatty acid synthesis and may therefore play a role in governing the total rate of fatty acid production. Possesses both acetoacetyl-ACP synthase and acetyl transacylase activities. Its substrate specificity determines the biosynthesis of branched-chain and/or straight-chain of fatty acids. The protein is Beta-ketoacyl-[acyl-carrier-protein] synthase III of Cupriavidus necator (strain ATCC 17699 / DSM 428 / KCTC 22496 / NCIMB 10442 / H16 / Stanier 337) (Ralstonia eutropha).